The sequence spans 248 residues: Functional amyloid sbunit FapE (248 aa).

An N-terminal signal peptide occupies residues 1–20 (MNTSRWLTALCLAASMPAYA).

The protein belongs to the FapE family. In terms of assembly, a minor component of purified amyloid fibrils. Fibrils are resistant to boiling in 2% (weight/vol) SDS and require &gt;90% (vol/vol) formic acid to dissolve.

It localises to the fimbrium. It is found in the secreted. In terms of biological role, a minor component of the functional amyloid in this bacterium. Upon overexpression of the endogenous six-gene locus (fapA-fapF) in situ, cells form large clumps during liquid growth, make large amounts of biofilm and produce amyloid fibrils. Expression of the 6 gene operon in E.coli strain BL21(DE3) induces flocculation and biofilm formation with copious extracellular fibrils. The polypeptide is Functional amyloid sbunit FapE (Pseudomonas fluorescens).